Reading from the N-terminus, the 258-residue chain is Ubiquinone/menaquinone biosynthesis C-methyltransferase UbiE (258 aa).

Residues Thr83, Asp104, and 130-131 contribute to the S-adenosyl-L-methionine site; that span reads DA.

Belongs to the class I-like SAM-binding methyltransferase superfamily. MenG/UbiE family.

It carries out the reaction a 2-demethylmenaquinol + S-adenosyl-L-methionine = a menaquinol + S-adenosyl-L-homocysteine + H(+). It catalyses the reaction a 2-methoxy-6-(all-trans-polyprenyl)benzene-1,4-diol + S-adenosyl-L-methionine = a 5-methoxy-2-methyl-3-(all-trans-polyprenyl)benzene-1,4-diol + S-adenosyl-L-homocysteine + H(+). Its pathway is quinol/quinone metabolism; menaquinone biosynthesis; menaquinol from 1,4-dihydroxy-2-naphthoate: step 2/2. It functions in the pathway cofactor biosynthesis; ubiquinone biosynthesis. Functionally, methyltransferase required for the conversion of demethylmenaquinol (DMKH2) to menaquinol (MKH2) and the conversion of 2-polyprenyl-6-methoxy-1,4-benzoquinol (DDMQH2) to 2-polyprenyl-3-methyl-6-methoxy-1,4-benzoquinol (DMQH2). The protein is Ubiquinone/menaquinone biosynthesis C-methyltransferase UbiE of Bordetella bronchiseptica (strain ATCC BAA-588 / NCTC 13252 / RB50) (Alcaligenes bronchisepticus).